The following is a 173-amino-acid chain: Alkyl hydroperoxide reductase AhpD (173 aa).

Cysteine 131 (proton donor) is an active-site residue. An intrachain disulfide couples cysteine 131 to cysteine 134. The active-site Cysteine sulfenic acid (-SOH) intermediate is cysteine 134.

Belongs to the AhpD family.

It carries out the reaction N(6)-[(R)-dihydrolipoyl]-L-lysyl-[lipoyl-carrier protein] + a hydroperoxide = N(6)-[(R)-lipoyl]-L-lysyl-[lipoyl-carrier protein] + an alcohol + H2O. Its function is as follows. Antioxidant protein with alkyl hydroperoxidase activity. Required for the reduction of the AhpC active site cysteine residues and for the regeneration of the AhpC enzyme activity. The polypeptide is Alkyl hydroperoxide reductase AhpD (Maricaulis maris (strain MCS10) (Caulobacter maris)).